Here is a 206-residue protein sequence, read N- to C-terminus: Imidazole glycerol phosphate synthase subunit hisH (206 aa).

The 205-residue stretch at 2–206 folds into the Glutamine amidotransferase type-1 domain; it reads KVGLVDYSMG…REVMKKAASL (205 aa). Residue C80 is the Nucleophile of the active site. Residues H184 and E186 contribute to the active site.

In terms of assembly, heterodimer of hisH and hisF.

The protein localises to the plastid. The protein resides in the chloroplast. It carries out the reaction 5-[(5-phospho-1-deoxy-D-ribulos-1-ylimino)methylamino]-1-(5-phospho-beta-D-ribosyl)imidazole-4-carboxamide + L-glutamine = D-erythro-1-(imidazol-4-yl)glycerol 3-phosphate + 5-amino-1-(5-phospho-beta-D-ribosyl)imidazole-4-carboxamide + L-glutamate + H(+). The catalysed reaction is L-glutamine + H2O = L-glutamate + NH4(+). Its pathway is amino-acid biosynthesis; L-histidine biosynthesis; L-histidine from 5-phospho-alpha-D-ribose 1-diphosphate: step 5/9. In terms of biological role, IGPS catalyzes the conversion of PRFAR and glutamine to IGP, AICAR and glutamate. The HisH subunit catalyzes the hydrolysis of glutamine to glutamate and ammonia as part of the synthesis of IGP and AICAR. The resulting ammonia molecule is channeled to the active site of HisF. The protein is Imidazole glycerol phosphate synthase subunit hisH of Cyanidioschyzon merolae (strain NIES-3377 / 10D) (Unicellular red alga).